A 1449-amino-acid chain; its full sequence is Disease resistance protein RPP5 (1449 aa).

Residues 10–178 enclose the TIR domain; the sequence is RRYDVFPSFS…KISNDVSNKL (169 aa). Residue E85 is part of the active site. One can recognise an NB-ARC domain in the interval 192-446; it reads EAHIEAIKSV…IACLFNGFEV (255 aa). LRR repeat units lie at residues 549-573, 574-595, 597-618, 619-642, 644-665, 687-710, 712-732, 733-755, 756-779, 802-825, 826-849, 915-939, 941-962, 963-985, 986-1011, 1028-1052, 1053-1077, 1096-1119, and 1120-1143; these read MRNL…VYLP, LKLR…TFKA, YLVN…TLPL, GSLK…SNAR, LEEL…IQNA, MCNL…VYFP, KLRL…NFKV, EYLV…TQPL, GRLK…SLAI, AIKL…DLNL, ESLE…KMGC, LGSL…SKAT, LKHL…IGNL, QKLV…DVNL, SSLE…SIKW, ATKL…IGNL, QNLR…NLSS, STNI…IEDF, and TRLR…IFRL.

In terms of assembly, interacts with RSH1.

It catalyses the reaction NAD(+) + H2O = ADP-D-ribose + nicotinamide + H(+). Its function is as follows. TIR-NB-LRR receptor-like protein that confers resistance to the pathogen Hyaloperonospora arabidopsis isolate Noco2 (downy mildew disease). Confers resistance to H.arabidopsis isolates Emoy2, Emwa1 and Noco2. This chain is Disease resistance protein RPP5, found in Arabidopsis thaliana (Mouse-ear cress).